A 339-amino-acid chain; its full sequence is Probable cytosolic iron-sulfur protein assembly protein CIAO1 (339 aa).

7 WD repeats span residues 14–53, 59–98, 103–142, 148–187, 192–231, 250–289, and 301–339; these read HPDS…WICK, GHQR…FECV, GHEN…EYEC, SHTQ…WVCC, GHES…NEQG, FHTR…DPQQ, and AHSQ…PAGL. The short motif at 176–178 is the LYR motif; required for interaction with HSC20 element; that stretch reads LYQ.

The protein belongs to the WD repeat CIA1 family. Component of the CIA complex. Interacts with CIAO2A and forms a complex with CIAO2B and MMS19; the interactions with CIAO2A and CIAO2B are mutually exclusive. Interacts with CHD1L, ERCC2, IREB2 and POLD1. Component of the MMXD complex, which includes CIAO1, ERCC2, CIAO2B, MMS19 and SLC25A5. Interacts with WT1. Interacts with CIAO3. Interacts (via LYR motif) with HSC20.

It is found in the cytoplasm. Functionally, key component of the cytosolic iron-sulfur protein assembly (CIA) complex, a multiprotein complex that mediates the incorporation of iron-sulfur cluster into extramitochondrial Fe/S proteins. As a CIA complex component, interacts specifically with CIAO2A or CIAO2B and MMS19 to assist different branches of iron-sulfur protein assembly, depending of its interactors. The complex CIAO1:CIAO2B:MMS19 binds to and facilitates the assembly of most cytosolic-nuclear Fe/S proteins. CIAO1:CIAO2A specifically matures ACO1 and stabilizes IREB2. Seems to specifically modulate the transactivation activity of WT1. As part of the mitotic spindle-associated MMXD complex it may play a role in chromosome segregation. This chain is Probable cytosolic iron-sulfur protein assembly protein CIAO1, found in Mus musculus (Mouse).